A 1625-amino-acid chain; its full sequence is Probable cation-transporting ATPase I (1625 aa).

8 helical membrane passes run 148–168 (VVSAVAADIFLAGSVSSPNSA), 177–197 (LAILVPLTAAAMDLVAMGATV), 358–378 (LIAAASALVAGGGTEDAAGAI), 637–657 (ASESAVHLAQGGTTLAGLLLV), 673–693 (WLNPVNAAAATALVSGMWSAA), 778–798 (ILAVGAAASAIVGSNIDALLV), 968–988 (LTSKVLPMTLAGGAAVTALAL), and 997–1017 (AVADGVAIAVAAVPEGLPLVA). Residue Asp1053 is the 4-aspartylphosphate intermediate of the active site. The Mg(2+) site is built by Asp1340 and Asp1344. A run of 3 helical transmembrane segments spans residues 1401-1421 (ILVGGNVGEVLFTVIGTAFGA), 1432-1452 (LLVNLLTDMFPALAVAVTSQF), and 1547-1567 (VIATALGSAGVLVGIIQTPVI).

This sequence belongs to the cation transport ATPase (P-type) (TC 3.A.3) family.

The protein resides in the cell membrane. The enzyme catalyses ATP + H2O = ADP + phosphate + H(+). This chain is Probable cation-transporting ATPase I (ctpI), found in Mycobacterium tuberculosis (strain CDC 1551 / Oshkosh).